A 101-amino-acid polypeptide reads, in one-letter code: Small ribosomal subunit protein uS10 (101 aa).

Belongs to the universal ribosomal protein uS10 family. As to quaternary structure, part of the 30S ribosomal subunit.

Its function is as follows. Involved in the binding of tRNA to the ribosomes. This Parabacteroides distasonis (strain ATCC 8503 / DSM 20701 / CIP 104284 / JCM 5825 / NCTC 11152) protein is Small ribosomal subunit protein uS10.